The primary structure comprises 428 residues: Enolase (428 aa).

Gln162 serves as a coordination point for (2R)-2-phosphoglycerate. Glu204 acts as the Proton donor in catalysis. Mg(2+)-binding residues include Asp241, Glu283, and Asp310. 4 residues coordinate (2R)-2-phosphoglycerate: Lys335, Arg364, Ser365, and Lys386. Lys335 serves as the catalytic Proton acceptor.

The protein belongs to the enolase family. It depends on Mg(2+) as a cofactor.

The protein localises to the cytoplasm. The protein resides in the secreted. It is found in the cell surface. The enzyme catalyses (2R)-2-phosphoglycerate = phosphoenolpyruvate + H2O. It functions in the pathway carbohydrate degradation; glycolysis; pyruvate from D-glyceraldehyde 3-phosphate: step 4/5. Functionally, catalyzes the reversible conversion of 2-phosphoglycerate (2-PG) into phosphoenolpyruvate (PEP). It is essential for the degradation of carbohydrates via glycolysis. The protein is Enolase of Nocardia farcinica (strain IFM 10152).